The chain runs to 208 residues: MALYNPYRSDMVATLGETTGFVARQLMLYRMKQDPVGREILRLQPRVKSWTVDLNEMRSLQEGTFGREYARFMDDNGLDQDSRDDVKFVDDIELAYVMQRYRDIHDFTHTLTGLPTVSVAGEIAVKWFEMVQTGLPMCTLGSIFGPLNPEVTPKHREQLRSYYIPWALSNGMKAKFIMNVFYERHFEEPIDSLRKKMNLTPARRLDGW.

Zn(2+) is bound by residues His-105, Asp-106, His-109, and Glu-122.

The protein belongs to the COQ4 family. As to quaternary structure, component of a multi-subunit COQ enzyme complex. The cofactor is Zn(2+).

It localises to the mitochondrion inner membrane. The catalysed reaction is a 4-hydroxy-3-methoxy-5-(all-trans-polyprenyl)benzoate + H(+) = a 2-methoxy-6-(all-trans-polyprenyl)phenol + CO2. The protein operates within cofactor biosynthesis; ubiquinone biosynthesis. Its function is as follows. Lyase that catalyzes the C1-decarboxylation of 4-hydroxy-3-methoxy-5-(all-trans-polyprenyl)benzoic acid into 2-methoxy-6-(all-trans-polyprenyl)phenol during ubiquinone biosynthesis. This chain is Ubiquinone biosynthesis protein COQ4 homolog, mitochondrial, found in Nematostella vectensis (Starlet sea anemone).